We begin with the raw amino-acid sequence, 667 residues long: E3 ubiquitin-protein ligase Midline-1 (667 aa).

Residues 10–60 form an RING-type zinc finger; the sequence is CPICLELFEDPLLLPCAHSLCFNCAHRILVSHCATNESVESITAFQCPTCR. A phosphoserine mark is found at Ser-92 and Ser-96. 2 consecutive B box-type zinc fingers follow at residues 116-165 and 172-212; these read KVLC…IEPI and GLMC…VAAL. Positions 119, 122, 134, 137, 142, 145, 150, 159, 175, 178, 198, and 204 each coordinate Zn(2+). The stretch at 205 to 264 forms a coiled coil; the sequence is RDHQVAALSERYDKLKQNLESNLTNLIKRNTELETLLAKLIQTCQHVEVNASRQEAKLTE. The COS domain occupies 320 to 379; that stretch reads LKENDHARFLQTAKNITERVSMATASSQVLIPEINLNDTFDTFALDFSREKKLLECLDYL. In terms of domain architecture, Fibronectin type-III spans 381 to 484; the sequence is APNPPTIREE…EPGKLKTNSQ (104 aa). Polar residues predominate over residues 471–485; the sequence is SRSSEPGKLKTNSQP. A disordered region spans residues 471 to 524; that stretch reads SRSSEPGKLKTNSQPFKLDPKSAHRKLKVSHDNLTVERDESSSKKSHTPERFTS. One can recognise a B30.2/SPRY domain in the interval 482–659; it reads NSQPFKLDPK…IITGLPIPDH (178 aa). Residues 499–520 are compositionally biased toward basic and acidic residues; sequence VSHDNLTVERDESSSKKSHTPE. Position 511 is a phosphoserine (Ser-511).

It belongs to the TRIM/RBCC family. As to quaternary structure, homodimer or heterodimer with MID2. Interacts with IGBP1. Interacts with TRIM16. In terms of processing, phosphorylated on serine and threonine residues. In terms of tissue distribution, in the fetus, highest expression found in kidney, followed by brain and lung. Expressed at low levels in fetal liver. In the adult, most abundant in heart, placenta and brain.

It localises to the cytoplasm. It is found in the cytoskeleton. The protein localises to the spindle. The enzyme catalyses S-ubiquitinyl-[E2 ubiquitin-conjugating enzyme]-L-cysteine + [acceptor protein]-L-lysine = [E2 ubiquitin-conjugating enzyme]-L-cysteine + N(6)-ubiquitinyl-[acceptor protein]-L-lysine.. Functionally, has E3 ubiquitin ligase activity towards IGBP1, promoting its monoubiquitination, which results in deprotection of the catalytic subunit of protein phosphatase PP2A, and its subsequent degradation by polyubiquitination. The polypeptide is E3 ubiquitin-protein ligase Midline-1 (MID1) (Homo sapiens (Human)).